A 971-amino-acid chain; its full sequence is UPF0182 protein CMS1887 (971 aa).

Helical transmembrane passes span 16 to 36, 56 to 76, 108 to 128, 161 to 181, 205 to 225, 255 to 275, and 281 to 301; these read LAIT…FAGF, WGAG…PVFV, LAMF…ASSG, FYHA…LGVL, IQIA…IWLD, TILA…AAIG, and IIGT…YPAI. The segment covering 687 to 702 has biased composition (polar residues); the sequence is QDLWTTPNDPTATTEA. Disordered regions lie at residues 687–706 and 874–924; these read QDLW…GTPA and GATA…AQDV. Composition is skewed to low complexity over residues 884-900 and 907-921; these read PTTP…TDGA and STPT…AAPA.

Belongs to the UPF0182 family.

The protein resides in the cell membrane. In Clavibacter sepedonicus (Clavibacter michiganensis subsp. sepedonicus), this protein is UPF0182 protein CMS1887.